We begin with the raw amino-acid sequence, 961 residues long: MDEQSVESIAEVFRCFICMEKLRDARLCPHCSKLCCFSCIRRWLTEQRAQCPHCRAPLQLRELVNCRWAEEVTQQLDTLQLCSLTKHEENEKDKCENHHEKLSVFCWTCKKCICHQCALWGGMHGGHTFKPLAEIYEQHVTKVNEEVAKLRRRLMELISLVQEVERNVEAVRNAKDERVREIRNAVEMMIARLDTQLKNKLITLMGQKTSLTQETELLESLLQEVEHQLRSCSKSELISKSSEILMMFQQVHRKPMASFVTTPVPPDFTSELVPSYDSATFVLENFSTLRQRADPVYSPPLQVSGLCWRLKVYPDGNGVVRGYYLSVFLELSAGLPETSKYEYRVEMVHQSCNDPTKNIIREFASDFEVGECWGYNRFFRLDLLANEGYLNRQNDTVILRFQVRSPTFFQKCRDQHWYITQLEAAQTGYIQQINNLKERLTIELSRTQKSRDLSPPDNHLSPQNDDSPETRTKKAGSCSDMLLEGGPTCASVRETKEDEDEEEKIQNEDYHHELSDGDLDLDLVGEDEVNHLDGSSSSASSTATSNTEENDIDEETMSGENDVEYNSMELEEGELMEDAAAAGPPGSSHSYVGASSRMSRRTHLCSAATSSLLDIDPLILIHLLDLKDRSSMENLWGLQPRPSASLLQPTASYSRKDKDQRKQQAMWRVPSDLKMLKRLKTQMAEVRCMKTDVKTTLSDIKGSSVASTDMQTNLFCADQAALTTCGPENSGRLQDLGMELLAKSSVAGCYIRNPTNKKNSPKSARAIAGSLSLRRAVDSGENSRSKGDCQVLAEGSSGSSQSGSRHSSPRALTHGIIGDLLPKSEDRQCKALDSDAVVVAVFNGLPTVEKRRKMVTLGTNAKGGRLEGMQMADLESHSEAGEVQPTLPEGASAAPEEGMSSDSDIECDTENEEQEEHTSMGAFNDPFLAQPPDEDSHSSFPDGEQIDPENLHFNPDEGGGR.

Position 1 is an N-acetylmethionine (Met1). The RING-type; degenerate zinc finger occupies 15-55; the sequence is CFICMEKLRDARLCPHCSKLCCFSCIRRWLTEQRAQCPHCR. The B box-type zinc finger occupies 90–132; that stretch reads NEKDKCENHHEKLSVFCWTCKKCICHQCALWGGMHGGHTFKPL. Residues Cys95, His98, Cys117, and His124 each contribute to the Zn(2+) site. A coiled-coil region spans residues 132–234; the sequence is LAEIYEQHVT…VEHQLRSCSK (103 aa). In terms of domain architecture, MATH spans 276-403; that stretch reads YDSATFVLEN…NDTVILRFQV (128 aa). A coiled-coil region spans residues 419-450; sequence ITQLEAAQTGYIQQINNLKERLTIELSRTQKS. 5 disordered regions span residues 447 to 514, 529 to 561, 645 to 665, 776 to 811, and 874 to 961; these read TQKS…HHEL, VNHL…SGEN, SLLQ…KQQA, AVDS…SPRA, and LESH…GGGR. Phosphoserine is present on Ser454. The span at 504–514 shows a compositional bias: basic and acidic residues; sequence KIQNEDYHHEL. Residues 535–545 show a composition bias toward low complexity; the sequence is SSSSASSTATS. Residues 548–561 are compositionally biased toward acidic residues; it reads EENDIDEETMSGEN. Basic and acidic residues predominate over residues 776–787; sequence AVDSGENSRSKG. A compositionally biased stretch (low complexity) spans 795–806; it reads GSSGSSQSGSRH. Residues 903–915 show a composition bias toward acidic residues; sequence SDIECDTENEEQE.

This sequence belongs to the TRIM/RBCC family. As to quaternary structure, associates with the PRC2/EED-EZH2 complex. Auto-ubiquitinated. In terms of tissue distribution, highly expressed in testis and brain. In embryonic tissues, expressed in epithelia, including ducts of the developing pancreas, epithelium of the midgut and nasal epithelium. In adult, detected in the central and peripheral nervous systems, including enteric ganglia, retina and the adrenal medulla (at protein level).

The protein resides in the chromosome. Its subcellular location is the cytoplasm. It is found in the perinuclear region. It localises to the peroxisome membrane. It carries out the reaction S-ubiquitinyl-[E2 ubiquitin-conjugating enzyme]-L-cysteine + [acceptor protein]-L-lysine = [E2 ubiquitin-conjugating enzyme]-L-cysteine + N(6)-ubiquitinyl-[acceptor protein]-L-lysine.. Its pathway is protein modification; protein ubiquitination. Its function is as follows. E3 ubiquitin-protein ligase required to prevent centriole reduplication. Probably acts by ubiquitinating positive regulators of centriole reduplication. Mediates monoubiquitination of 'Lys-119' of histone H2A (H2AK119Ub), a specific tag for epigenetic transcriptional repression: associates with some Polycomb group (PcG) multiprotein PRC2-like complex and mediates repression of target genes. Also acts as a positive regulator of peroxisome import by mediating monoubiquitination of PEX5 at 'Lys-472': monoubiquitination promotes PEX5 stabilitation by preventing its polyubiquitination and degradation by the proteasome. The chain is E3 ubiquitin-protein ligase TRIM37 from Mus musculus (Mouse).